The sequence spans 76 residues: uncharacterized protein (76 aa).

A run of 2 helical transmembrane segments spans residues 16-33 (FAFTLLAVSTFLYIGAVL) and 45-61 (TMFLADCVFLAGAFFCA).

Its subcellular location is the cell membrane. This is an uncharacterized protein from Bacillus subtilis (strain 168).